The chain runs to 419 residues: F-box/FBD/LRR-repeat protein At4g26340 (419 aa).

The F-box domain maps to 1–53 (MDRISQLSDDLLLQILSFIPGKDVVATSLLSKRWQSLWMLVSELEYDDSYHTG). LRR repeat units lie at residues 55–81 (YKSF…HLNL), 132–159 (TLRL…HLKT), 160–185 (VDYE…FVER), 187–208 (DQDL…SMID), 226–253 (YLNI…HVDI), 254–284 (TQGV…MCPS), and 299–324 (VVKG…KLID). Residues 339–389 (GWKLPSSVPECLLFSLEAFEWIGYKGRRGDREVATYVLKNAACLRTAKFSP) form the FBD domain.

The protein is F-box/FBD/LRR-repeat protein At4g26340 of Arabidopsis thaliana (Mouse-ear cress).